Reading from the N-terminus, the 614-residue chain is Nuclear receptor subfamily 1 group D member 1 (614 aa).

A compositionally biased stretch (polar residues) spans 1 to 12 (MTTLDSNNNTGG). Positions 1 to 70 (MTTLDSNNNT…TQDPARSFGS (70 aa)) are required for phosphorylation by CSNK1E and cytoplasmic localization. The interval 1–119 (MTTLDSNNNT…SSRVSPSKST (119 aa)) is disordered. The segment at 1–128 (MTTLDSNNNT…TSNITKLNGM (128 aa)) is modulating. Positions 14-34 (ITYIGSSGSSPSRTSPESLYS) are enriched in low complexity. Residues 35-48 (DNSNGSFQSLTQGC) are compositionally biased toward polar residues. The interval 49 to 284 (PTYFPPSPTG…PPRSPSPEPT (236 aa)) is crucial for activation of GJA1. Residues Ser55 and Ser59 each carry the phosphoserine; by GSK3-beta modification. Over residues 69–102 (GSIPPSLSDDGSPSSSSSSSSSSSSFYNGSPPGS) the composition is skewed to low complexity. The segment at residues 129–205 (VLLCKVCGDV…VGMSRDAVRF (77 aa)) is a DNA-binding region (nuclear receptor). 2 consecutive NR C4-type zinc fingers follow at residues 132-152 (CKVCGDVASGFHYGVHACEGC) and 169-193 (CLKNENCSIVRINRNRCQQCRFKKC). An N6-acetyllysine; by KAT5 mark is found at Lys191 and Lys192. Residues 233–243 (SQCPLETSPTQ) are compositionally biased toward polar residues. Disordered regions lie at residues 233-285 (SQCP…EPTV) and 311-345 (PGNFNANHASGSPPATTPHRWENQGCPPAPNDNNT). Residues 244–261 (HPTPGPMGPSPPPAPVPS) show a composition bias toward pro residues. Thr274 carries the post-translational modification Phosphothreonine; by CDK1. The NR LBD domain occupies 284–614 (TVEDVISQVA…KLLSFRVDAQ (331 aa)). The segment covering 311 to 324 (PGNFNANHASGSPP) has biased composition (polar residues). Lys400 is modified (N6-acetyllysine). Cys418 is a heme binding site. Lys591 carries the post-translational modification N6-acetyllysine. Position 602 (His602) interacts with heme.

The protein belongs to the nuclear hormone receptor family. NR1 subfamily. As to quaternary structure, binds DNA as a monomer or a homodimer. Interacts with C1D, NR2E3 and SP1. Interacts with OPHN1 (via C-terminus). Interacts with ZNHIT1. Interacts with PER2; the interaction associates PER2 to BMAL1 promoter region. Interacts with CRY1. Interacts with CCAR2. Interacts with SIAH2. Interacts with CDK1. Interacts with FBXW7. Interacts with HUWE1. Interacts with NR0B2. Interacts with NFIL3. Interacts (via domain NR LBD) with HSP90AA1 and HSP90AB1. Post-translationally, ubiquitinated, leading to its proteasomal degradation. Ubiquitinated by SIAH2; leading to its proteasomal degradation. Ubiquitinated by the SCF(FBXW7) complex when phosphorylated by CDK1 leading to its proteasomal degradation. Rapidly ubiquitinated in response to inflammatory triggers and sumoylation is a prerequisite to its ubiquitination. In terms of processing, sumoylated by UBE2I, desumoylated by SENP1, and sumoylation is a prerequisite to its ubiquitination. Phosphorylated by CSNK1E; phosphorylation enhances its cytoplasmic localization. Post-translationally, undergoes lysosome-mediated degradation in a time-dependent manner in the liver. As to expression, widely expressed. Expressed at high levels in the liver, adipose tissue, skeletal muscle and brain. Also expressed in endothelial cells (ECs), vascular smooth muscle cells (VSMCs) and macrophages. Expression oscillates diurnally in the suprachiasmatic nucleus (SCN) of the hypothalamus as well as in peripheral tissues. Expression increases during the differentiation of pre-adipocytes into mature adipocytes. Expressed at high levels in some squamous carcinoma cell lines.

Its subcellular location is the nucleus. The protein localises to the cytoplasm. It is found in the cell projection. It localises to the dendrite. The protein resides in the dendritic spine. Transcriptional repressor which coordinates circadian rhythm and metabolic pathways in a heme-dependent manner. Integral component of the complex transcription machinery that governs circadian rhythmicity and forms a critical negative limb of the circadian clock by directly repressing the expression of core clock components BMAL1, CLOCK and CRY1. Also regulates genes involved in metabolic functions, including lipid and bile acid metabolism, adipogenesis, gluconeogenesis and the macrophage inflammatory response. Acts as a receptor for heme which stimulates its interaction with the NCOR1/HDAC3 corepressor complex, enhancing transcriptional repression. Recognizes two classes of DNA response elements within the promoter of its target genes and can bind to DNA as either monomers or homodimers, depending on the nature of the response element. Binds as a monomer to a response element composed of the consensus half-site motif 5'-[A/G]GGTCA-3' preceded by an A/T-rich 5' sequence (RevRE), or as a homodimer to a direct repeat of the core motif spaced by two nucleotides (RevDR-2). Acts as a potent competitive repressor of ROR alpha (RORA) function and regulates the levels of its ligand heme by repressing the expression of PPARGC1A, a potent inducer of heme synthesis. Regulates lipid metabolism by repressing the expression of APOC3 and by influencing the activity of sterol response element binding proteins (SREBPs); represses INSIG2 which interferes with the proteolytic activation of SREBPs which in turn govern the rhythmic expression of enzymes with key functions in sterol and fatty acid synthesis. Regulates gluconeogenesis via repression of G6PC1 and PEPCK and adipocyte differentiation via repression of PPARG. Regulates glucagon release in pancreatic alpha-cells via the AMPK-NAMPT-SIRT1 pathway and the proliferation, glucose-induced insulin secretion and expression of key lipogenic genes in pancreatic-beta cells. Positively regulates bile acid synthesis by increasing hepatic expression of CYP7A1 via repression of NR0B2 and NFIL3 which are negative regulators of CYP7A1. Modulates skeletal muscle oxidative capacity by regulating mitochondrial biogenesis and autophagy; controls mitochondrial biogenesis and respiration by interfering with the STK11-PRKAA1/2-SIRT1-PPARGC1A signaling pathway. Represses the expression of SERPINE1/PAI1, an important modulator of cardiovascular disease and the expression of inflammatory cytokines and chemokines in macrophages. Represses gene expression at a distance in macrophages by inhibiting the transcription of enhancer-derived RNAs (eRNAs). Plays a role in the circadian regulation of body temperature and negatively regulates thermogenic transcriptional programs in brown adipose tissue (BAT); imposes a circadian oscillation in BAT activity, increasing body temperature when awake and depressing thermogenesis during sleep. In concert with NR2E3, regulates transcriptional networks critical for photoreceptor development and function. In addition to its activity as a repressor, can also act as a transcriptional activator. In the ovarian granulosa cells acts as a transcriptional activator of STAR which plays a role in steroid biosynthesis. In collaboration with SP1, activates GJA1 transcription in a heme-independent manner. Represses the transcription of CYP2B10, CYP4A10 and CYP4A14. Represses the transcription of CES2. Represses and regulates the circadian expression of TSHB in a NCOR1-dependent manner. Negatively regulates the protein stability of NR3C1 and influences the time-dependent subcellular distribution of NR3C1, thereby affecting its transcriptional regulatory activity. Plays a critical role in the circadian control of neutrophilic inflammation in the lung; under resting, non-stress conditions, acts as a rhythmic repressor to limit inflammatory activity whereas in the presence of inflammatory triggers undergoes ubiquitin-mediated degradation thereby relieving inhibition of the inflammatory response. Plays a key role in the circadian regulation of microglial activation and neuroinflammation; suppresses microglial activation through the NF-kappaB pathway in the central nervous system. Plays a role in the regulation of the diurnal rhythms of lipid and protein metabolism in the skeletal muscle via transcriptional repression of genes controlling lipid and amino acid metabolism in the muscle. This Homo sapiens (Human) protein is Nuclear receptor subfamily 1 group D member 1 (NR1D1).